Consider the following 98-residue polypeptide: UPF0251 protein VC0395_0048/VC395_A0084 (98 aa).

Belongs to the UPF0251 family.

This chain is UPF0251 protein VC0395_0048/VC395_A0084, found in Vibrio cholerae serotype O1 (strain ATCC 39541 / Classical Ogawa 395 / O395).